A 447-amino-acid polypeptide reads, in one-letter code: Ribosomal protein uS12 methylthiotransferase RimO (447 aa).

One can recognise an MTTase N-terminal domain in the interval 10–120 (PKVGFVSLGC…VVNAVHDVVP (111 aa)). Residues Cys-19, Cys-55, Cys-84, Cys-153, Cys-157, and Cys-160 each contribute to the [4Fe-4S] cluster site. Positions 139-377 (LTPRHYAYLK…MAHQQAISAA (239 aa)) constitute a Radical SAM core domain. In terms of domain architecture, TRAM spans 380-447 (QMKIGKEIEV…DEYDLWAEML (68 aa)).

Belongs to the methylthiotransferase family. RimO subfamily. Requires [4Fe-4S] cluster as cofactor.

Its subcellular location is the cytoplasm. The enzyme catalyses L-aspartate(89)-[ribosomal protein uS12]-hydrogen + (sulfur carrier)-SH + AH2 + 2 S-adenosyl-L-methionine = 3-methylsulfanyl-L-aspartate(89)-[ribosomal protein uS12]-hydrogen + (sulfur carrier)-H + 5'-deoxyadenosine + L-methionine + A + S-adenosyl-L-homocysteine + 2 H(+). In terms of biological role, catalyzes the methylthiolation of an aspartic acid residue of ribosomal protein uS12. The polypeptide is Ribosomal protein uS12 methylthiotransferase RimO (Pseudomonas syringae pv. syringae (strain B728a)).